Here is a 264-residue protein sequence, read N- to C-terminus: Complement C1q tumor necrosis factor-related protein 6 (264 aa).

An N-terminal signal peptide occupies residues 1-24 (MRVIMGIASLGFLWAVFLLPLVFG). The N-linked (GlcNAc...) asparagine glycan is linked to asparagine 77. Residues 81–125 (LKGDKGDRGPTGTPGKPGKNGTRGDRGSQGVKGDKGQAGSPGSSC) are disordered. The region spanning 83-124 (GDKGDRGPTGTPGKPGKNGTRGDRGSQGVKGDKGQAGSPGSS) is the Collagen-like domain. The segment covering 90–100 (PTGTPGKPGKN) has biased composition (low complexity). The 140-residue stretch at 125 to 264 (CQTHYSAFSV…SGHLIKAEDN (140 aa)) folds into the C1q domain.

The protein resides in the secreted. The chain is Complement C1q tumor necrosis factor-related protein 6 (C1qtnf6) from Mus musculus (Mouse).